Here is a 200-residue protein sequence, read N- to C-terminus: Recombination protein RecR (200 aa).

The segment at 58-73 (CSICGNITEDDPCPIC) adopts a C4-type zinc-finger fold. Residues 81-177 (SQILVVEQSQ…KVTRLAHGLS (97 aa)) enclose the Toprim domain.

This sequence belongs to the RecR family.

Functionally, may play a role in DNA repair. It seems to be involved in an RecBC-independent recombinational process of DNA repair. It may act with RecF and RecO. The polypeptide is Recombination protein RecR (Limosilactobacillus reuteri (strain DSM 20016) (Lactobacillus reuteri)).